A 360-amino-acid chain; its full sequence is DNA replication and repair protein RecF (360 aa).

G33–T40 contacts ATP.

Belongs to the RecF family.

It localises to the cytoplasm. Functionally, the RecF protein is involved in DNA metabolism; it is required for DNA replication and normal SOS inducibility. RecF binds preferentially to single-stranded, linear DNA. It also seems to bind ATP. The polypeptide is DNA replication and repair protein RecF (Rickettsia akari (strain Hartford)).